The sequence spans 260 residues: Ribose-5-phosphate isomerase (260 aa).

The protein belongs to the ribose 5-phosphate isomerase family.

Its subcellular location is the cytoplasm. It carries out the reaction aldehydo-D-ribose 5-phosphate = D-ribulose 5-phosphate. It participates in carbohydrate degradation; pentose phosphate pathway; D-ribose 5-phosphate from D-ribulose 5-phosphate (non-oxidative stage): step 1/1. This chain is Ribose-5-phosphate isomerase (RKI1), found in Candida glabrata (strain ATCC 2001 / BCRC 20586 / JCM 3761 / NBRC 0622 / NRRL Y-65 / CBS 138) (Yeast).